The sequence spans 92 residues: MGQSLQEGRKQGRLLPAPSAHFLKHAHLASPSEVGGEPEIGSLCASHVLHMSPLYSVNLQVSPGSLTFHSLSLRSTSTRLQPQSTYIVGPLC.

This is an uncharacterized protein from Homo sapiens (Human).